Consider the following 460-residue polypeptide: Exodeoxyribonuclease 7 large subunit (460 aa).

Residues 438 to 460 (ARVEKVNREEEKQSGSQKNGTRD) form a disordered region. Residues 439–450 (RVEKVNREEEKQ) show a composition bias toward basic and acidic residues. Polar residues predominate over residues 451 to 460 (SGSQKNGTRD).

It belongs to the XseA family. In terms of assembly, heterooligomer composed of large and small subunits.

It is found in the cytoplasm. The catalysed reaction is Exonucleolytic cleavage in either 5'- to 3'- or 3'- to 5'-direction to yield nucleoside 5'-phosphates.. Its function is as follows. Bidirectionally degrades single-stranded DNA into large acid-insoluble oligonucleotides, which are then degraded further into small acid-soluble oligonucleotides. The polypeptide is Exodeoxyribonuclease 7 large subunit (Brevibacillus brevis (strain 47 / JCM 6285 / NBRC 100599)).